Reading from the N-terminus, the 255-residue chain is Sec-independent protein translocase protein TatC (255 aa).

The next 7 membrane-spanning stretches (helical) occupy residues 28 to 48 (VAAV…IYAL), 56 to 76 (YLPE…LAPF), 80 to 100 (LMIS…GFIA), 121 to 141 (LFYA…FGFF), 165 to 185 (LFFA…LIWV), 195 to 212 (NSRP…MVLT), and 216 to 236 (VFSQ…GVFF).

Belongs to the TatC family. In terms of assembly, the Tat system comprises two distinct complexes: a TatABC complex, containing multiple copies of TatA, TatB and TatC subunits, and a separate TatA complex, containing only TatA subunits. Substrates initially bind to the TatABC complex, which probably triggers association of the separate TatA complex to form the active translocon.

The protein localises to the cell membrane. In terms of biological role, part of the twin-arginine translocation (Tat) system that transports large folded proteins containing a characteristic twin-arginine motif in their signal peptide across membranes. Together with TatB, TatC is part of a receptor directly interacting with Tat signal peptides. The polypeptide is Sec-independent protein translocase protein TatC (Azotobacter chroococcum mcd 1).